The chain runs to 450 residues: Probable ATP-dependent RNA helicase MG425 homolog (450 aa).

Positions 3-31 match the Q motif motif; it reads STFNELGVSPALIATLKDNNINQPTTIQQ. Residues 34–206 enclose the Helicase ATP-binding domain; the sequence is IPQFLQHQNL…KQITKNGIFL (173 aa). 47 to 54 contributes to the ATP binding site; that stretch reads SPTGTGKT. Positions 154–157 match the DEVD box motif; that stretch reads DEVD. In terms of domain architecture, Helicase C-terminal spans 234–384; sequence RKKQALYSLV…PLRPMRLRLI (151 aa). The interval 429–450 is disordered; sequence MRQPERDMQKNKLHDSDWQSNM. The segment covering 430–450 has biased composition (basic and acidic residues); the sequence is RQPERDMQKNKLHDSDWQSNM.

This sequence belongs to the DEAD box helicase family.

The enzyme catalyses ATP + H2O = ADP + phosphate + H(+). In Mycoplasma pneumoniae (strain ATCC 29342 / M129 / Subtype 1) (Mycoplasmoides pneumoniae), this protein is Probable ATP-dependent RNA helicase MG425 homolog.